Reading from the N-terminus, the 138-residue chain is Small ribosomal subunit protein uS11c (138 aa).

The disordered stretch occupies residues 1–23 (MAKPIPRIGSRRNGRIGSRKSAR). Residues 9-23 (GSRRNGRIGSRKSAR) show a composition bias toward basic residues.

The protein belongs to the universal ribosomal protein uS11 family. Part of the 30S ribosomal subunit.

Its subcellular location is the plastid. The protein resides in the chloroplast. The chain is Small ribosomal subunit protein uS11c from Vitis vinifera (Grape).